Consider the following 145-residue polypeptide: UPF0260 protein VV2402 (145 aa).

The protein belongs to the UPF0260 family.

The sequence is that of UPF0260 protein VV2402 from Vibrio vulnificus (strain YJ016).